A 107-amino-acid polypeptide reads, in one-letter code: MTDFTLSDLEKIVATRARAAPEESWTAKLVAAGQTKAAKKLGEEAVETVIAAIGEDRKNLVDESADLLYHLMVVLNIAAVPLQDVMSELARRTSQSGLQEKANRQNP.

This sequence belongs to the PRA-PH family.

It is found in the cytoplasm. The catalysed reaction is 1-(5-phospho-beta-D-ribosyl)-ATP + H2O = 1-(5-phospho-beta-D-ribosyl)-5'-AMP + diphosphate + H(+). Its pathway is amino-acid biosynthesis; L-histidine biosynthesis; L-histidine from 5-phospho-alpha-D-ribose 1-diphosphate: step 2/9. The chain is Phosphoribosyl-ATP pyrophosphatase (hisE) from Rhizobium meliloti (strain 1021) (Ensifer meliloti).